Here is a 62-residue protein sequence, read N- to C-terminus: Large ribosomal subunit protein bL33 (62 aa).

This sequence belongs to the bacterial ribosomal protein bL33 family.

The protein is Large ribosomal subunit protein bL33 of Phocaeicola vulgatus (strain ATCC 8482 / DSM 1447 / JCM 5826 / CCUG 4940 / NBRC 14291 / NCTC 11154) (Bacteroides vulgatus).